A 340-amino-acid chain; its full sequence is Probable tRNA pseudouridine synthase B (340 aa).

The active-site Nucleophile is aspartate 82. The PUA domain occupies 250 to 325; that stretch reads LPKVWIKDSA…IAVDVEKVFM (76 aa).

It belongs to the pseudouridine synthase TruB family. Type 2 subfamily.

It catalyses the reaction uridine(55) in tRNA = pseudouridine(55) in tRNA. Its function is as follows. Could be responsible for synthesis of pseudouridine from uracil-55 in the psi GC loop of transfer RNAs. The protein is Probable tRNA pseudouridine synthase B of Pyrococcus furiosus (strain ATCC 43587 / DSM 3638 / JCM 8422 / Vc1).